Consider the following 154-residue polypeptide: Protein-export protein SecB (154 aa).

The protein belongs to the SecB family. Homotetramer, a dimer of dimers. One homotetramer interacts with 1 SecA dimer.

The protein resides in the cytoplasm. In terms of biological role, one of the proteins required for the normal export of preproteins out of the cell cytoplasm. It is a molecular chaperone that binds to a subset of precursor proteins, maintaining them in a translocation-competent state. It also specifically binds to its receptor SecA. This Buchnera aphidicola subsp. Schizaphis graminum (strain Sg) protein is Protein-export protein SecB.